Reading from the N-terminus, the 122-residue chain is uncharacterized protein (122 aa).

Residues 46-116 (KDLQKEVDDL…HQLENKRELN (71 aa)) adopt a coiled-coil conformation.

This is an uncharacterized protein from Invertebrate iridescent virus 6 (IIV-6).